Consider the following 174-residue polypeptide: ATP-dependent protease subunit HslV (174 aa).

Residue threonine 2 is part of the active site. Residues glycine 157, cysteine 160, and threonine 163 each coordinate Na(+).

It belongs to the peptidase T1B family. HslV subfamily. A double ring-shaped homohexamer of HslV is capped on each side by a ring-shaped HslU homohexamer. The assembly of the HslU/HslV complex is dependent on binding of ATP.

The protein resides in the cytoplasm. It carries out the reaction ATP-dependent cleavage of peptide bonds with broad specificity.. Its activity is regulated as follows. Allosterically activated by HslU binding. Functionally, protease subunit of a proteasome-like degradation complex believed to be a general protein degrading machinery. The sequence is that of ATP-dependent protease subunit HslV from Yersinia pseudotuberculosis serotype I (strain IP32953).